Reading from the N-terminus, the 600-residue chain is ATP-dependent RNA helicase DDX55 (600 aa).

The short motif at W9–S37 is the Q motif element. One can recognise a Helicase ATP-binding domain in the interval I40–I223. Residue A53–T60 participates in ATP binding. Positions D171 to D174 match the DEAD box motif. One can recognise a Helicase C-terminal domain in the interval K254–D402. Positions L499–K513 are enriched in basic and acidic residues. The segment at L499–M551 is disordered. Residues K514 to R538 show a composition bias toward basic residues. The important for nuclear localization stretch occupies residues K533–K562. 2 positions are modified to phosphoserine: S544 and S594.

The protein belongs to the DEAD box helicase family. DDX55/SPB4 subfamily. Interacts with 28S rRNA. Interacts with double-stranded RNA substrates in vitro; the interaction stimulates ATPase activity.

It localises to the nucleus. The protein localises to the nucleoplasm. It catalyses the reaction ATP + H2O = ADP + phosphate + H(+). Its function is as follows. Probable ATP-binding RNA helicase. Has ATPase activity and is involved in the maturation of precursor large subunit rRNAs. The polypeptide is ATP-dependent RNA helicase DDX55 (Ddx55) (Mus musculus (Mouse)).